Reading from the N-terminus, the 253-residue chain is Imidazole glycerol phosphate synthase subunit HisF (253 aa).

Catalysis depends on residues Asp11 and Asp130.

This sequence belongs to the HisA/HisF family. As to quaternary structure, heterodimer of HisH and HisF.

Its subcellular location is the cytoplasm. It carries out the reaction 5-[(5-phospho-1-deoxy-D-ribulos-1-ylimino)methylamino]-1-(5-phospho-beta-D-ribosyl)imidazole-4-carboxamide + L-glutamine = D-erythro-1-(imidazol-4-yl)glycerol 3-phosphate + 5-amino-1-(5-phospho-beta-D-ribosyl)imidazole-4-carboxamide + L-glutamate + H(+). Its pathway is amino-acid biosynthesis; L-histidine biosynthesis; L-histidine from 5-phospho-alpha-D-ribose 1-diphosphate: step 5/9. Functionally, IGPS catalyzes the conversion of PRFAR and glutamine to IGP, AICAR and glutamate. The HisF subunit catalyzes the cyclization activity that produces IGP and AICAR from PRFAR using the ammonia provided by the HisH subunit. This chain is Imidazole glycerol phosphate synthase subunit HisF, found in Cereibacter sphaeroides (strain ATCC 17025 / ATH 2.4.3) (Rhodobacter sphaeroides).